Consider the following 342-residue polypeptide: S-adenosylmethionine:tRNA ribosyltransferase-isomerase (342 aa).

It belongs to the QueA family. Monomer.

The protein localises to the cytoplasm. The enzyme catalyses 7-aminomethyl-7-carbaguanosine(34) in tRNA + S-adenosyl-L-methionine = epoxyqueuosine(34) in tRNA + adenine + L-methionine + 2 H(+). Its pathway is tRNA modification; tRNA-queuosine biosynthesis. In terms of biological role, transfers and isomerizes the ribose moiety from AdoMet to the 7-aminomethyl group of 7-deazaguanine (preQ1-tRNA) to give epoxyqueuosine (oQ-tRNA). The protein is S-adenosylmethionine:tRNA ribosyltransferase-isomerase of Streptococcus pneumoniae (strain ATCC BAA-255 / R6).